A 514-amino-acid chain; its full sequence is Deoxynucleoside triphosphate triphosphohydrolase SAMHD1 homolog (514 aa).

The interval 1-24 (MNNTFKYVNEDVSGTEGEESDYDP) is disordered. Lysine 80 contributes to the GTP binding site. Asparagine 83 provides a ligand contact to a 2'-deoxyribonucleoside 5'-triphosphate. 101–109 (DTEQFQRLR) provides a ligand contact to GTP. Substrate is bound by residues glutamine 113 and arginine 128. The 132-residue stretch at 128–259 (RFEHSIGVSH…SVDVDKFDYL (132 aa)) folds into the HD domain. Residues histidine 131, histidine 170, and aspartate 171 each coordinate Zn(2+). Histidine 174 is a substrate binding site. The active site involves histidine 196. Residues 252–258 (DVDKFDY), tyrosine 258, and aspartate 262 contribute to the substrate site. Aspartate 254 contacts Zn(2+). A 2'-deoxyribonucleoside 5'-triphosphate contacts are provided by residues arginine 276, 291-293 (LSK), and asparagine 297. Substrate-binding positions include arginine 305 and 309-314 (HKLVYT). A 2'-deoxyribonucleoside 5'-triphosphate contacts are provided by histidine 315 and lysine 316. Positions 380 and 384 each coordinate GTP.

This sequence belongs to the SAMHD1 family. As to quaternary structure, homodimer; in absence of GTP and dNTP. Homotetramer; in GTP- and dNTP-bound form. Requires Zn(2+) as cofactor.

The enzyme catalyses a 2'-deoxyribonucleoside 5'-triphosphate + H2O = a 2'-deoxyribonucleoside + triphosphate + H(+). Allosterically activated and regulated via the combined actions of GTP and dNTPs (dATP, dGTP, dTTP and dCTP): Allosteric site 1 binds GTP, while allosteric site 2 binds dNTP. Allosteric activation promotes the formation of highly active homotetramers. In terms of biological role, has deoxynucleoside triphosphate (dNTPase) activity. The sequence is that of Deoxynucleoside triphosphate triphosphohydrolase SAMHD1 homolog from Dictyostelium discoideum (Social amoeba).